The sequence spans 320 residues: tRNA(Ile)-lysidine synthase, chloroplastic (320 aa).

31 to 36 serves as a coordination point for ATP; that stretch reads SGGKDS.

It belongs to the tRNA(Ile)-lysidine synthase family.

It is found in the plastid. Its subcellular location is the chloroplast. The catalysed reaction is cytidine(34) in tRNA(Ile2) + L-lysine + ATP = lysidine(34) in tRNA(Ile2) + AMP + diphosphate + H(+). Ligates lysine onto the cytidine present at position 34 of the AUA codon-specific tRNA(Ile) that contains the anticodon CAU, in an ATP-dependent manner. Cytidine is converted to lysidine, thus changing the amino acid specificity of the tRNA from methionine to isoleucine. The protein is tRNA(Ile)-lysidine synthase, chloroplastic of Gracilaria tenuistipitata var. liui (Red alga).